The chain runs to 211 residues: MTSQRTRERLIQRLYEEGVSNASVLEVIRRTPRHLFVDEALAHRAYEDTALPIGNNQTISQPYMVARMSELLLEAGPLDKVLEIGTGSGYQTAVLSQLVERVFSVERIKVLQDRAKERLIELNLRNVVFRWGDGWEGWPALAPYNGIIVTAVATDVPQALLDQLAPGGRMVIPVGSGEVQQLMLIVREENGFSRHVLGAVRFVPLLNGPLA.

Ser-60 is a catalytic residue.

Belongs to the methyltransferase superfamily. L-isoaspartyl/D-aspartyl protein methyltransferase family.

It is found in the cytoplasm. It catalyses the reaction [protein]-L-isoaspartate + S-adenosyl-L-methionine = [protein]-L-isoaspartate alpha-methyl ester + S-adenosyl-L-homocysteine. In terms of biological role, catalyzes the methyl esterification of L-isoaspartyl residues in peptides and proteins that result from spontaneous decomposition of normal L-aspartyl and L-asparaginyl residues. It plays a role in the repair and/or degradation of damaged proteins. In Pseudomonas fluorescens (strain Pf0-1), this protein is Protein-L-isoaspartate O-methyltransferase.